Consider the following 218-residue polypeptide: Trimethylamine corrinoid protein 2 (218 aa).

Residues 1 to 92 (MAGKEEIIAK…EMEKRKSQTK (92 aa)) form the B12-binding N-terminal domain. The B12-binding domain occupies 94–218 (LGTVIIGTIE…AKVKAALKVG (125 aa)). Histidine 107 serves as a coordination point for methylcob(III)alamin.

It belongs to the methylamine corrinoid protein family. As to quaternary structure, can form a complex with MttB.

It functions in the pathway one-carbon metabolism; methanogenesis from trimethylamine. Its function is as follows. Acts probably as a methyl group carrier between MttB and either MtbA or MtaA. The protein is Trimethylamine corrinoid protein 2 (mttC2) of Methanosarcina mazei (strain ATCC BAA-159 / DSM 3647 / Goe1 / Go1 / JCM 11833 / OCM 88) (Methanosarcina frisia).